A 375-amino-acid polypeptide reads, in one-letter code: Solute carrier family 35 member F2 (375 aa).

The residue at position 1 (Met-1) is an N-acetylmethionine. Residues Ser-5, Ser-22, Ser-25, and Ser-28 each carry the phosphoserine modification. The next 10 membrane-spanning stretches (helical) occupy residues 39-59 (ILKT…TAIT), 73-93 (MLQS…MLAF), 108-126 (WWKY…YLIV), 136-156 (SVQL…WFIL), 165-185 (FIAV…DILA), 195-215 (VLIG…SNVC), 227-247 (EFLG…LLIV), 263-283 (LLFV…PLVI), 290-310 (SVNL…LFLF), and 314-334 (FSGL…LYCS). The residue at position 372 (Ser-372) is a Phosphoserine.

It belongs to the SLC35F solute transporter family.

Its subcellular location is the membrane. In terms of biological role, putative solute transporter. The polypeptide is Solute carrier family 35 member F2 (Slc35f2) (Mus musculus (Mouse)).